The following is a 237-amino-acid chain: MNRIRFISLILNLDSCDSNIQEYSRLAYVHDLNKLMDENFVSLLLIILKLAKNSKRLQPTYHNVYLFNLLKSYALSEIDGYVLGHFSRGFVNTLMHYKNAQYETLESLLSANNFFEANKFTQQILLELAGEQSKQRNWMYFTDVHSINHQSVSDLNHLWELYSQGNFGFSIQKRIWISVNKNWKKFWKKIGWINSNSKWLKYPGEFMWAVNAPPGHLPLFNQLRGVYVLEFIFDYYL.

It belongs to the ycf53 family.

Its subcellular location is the plastid. It localises to the chloroplast. This is an uncharacterized protein from Cyanidium caldarium (Red alga).